We begin with the raw amino-acid sequence, 416 residues long: Ribosome biogenesis protein WDR12 homolog (416 aa).

Residues 7-89 (VQVRFFTKQK…ESVVEIEYLE (83 aa)) form a ubiquitin-like (UBL) domain region. 7 WD repeats span residues 101–138 (VHDD…LAKV), 140–184 (GHTS…ASCV), 189–228 (GHTQ…EGGD), 259–297 (GHTQ…NKQT), 299–338 (TGSK…GQVV), 344–384 (SHQG…TPLY), and 388–416 (GHQD…LILY). Positions 226–245 (GGDEGENGSLSKKQKTTGVK) are disordered.

It belongs to the WD repeat WDR12/YTM1 family.

The protein resides in the nucleus. It localises to the nucleolus. Its subcellular location is the nucleoplasm. Required for maturation of ribosomal RNAs and formation of the large ribosomal subunit. In Nematostella vectensis (Starlet sea anemone), this protein is Ribosome biogenesis protein WDR12 homolog.